Consider the following 122-residue polypeptide: Large ribosomal subunit protein uL14 (122 aa).

It belongs to the universal ribosomal protein uL14 family. Part of the 50S ribosomal subunit. Forms a cluster with proteins L3 and L19. In the 70S ribosome, L14 and L19 interact and together make contacts with the 16S rRNA in bridges B5 and B8.

Functionally, binds to 23S rRNA. Forms part of two intersubunit bridges in the 70S ribosome. In Stenotrophomonas maltophilia (strain R551-3), this protein is Large ribosomal subunit protein uL14.